The sequence spans 168 residues: Photosystem I assembly protein Ycf3 (168 aa).

TPR repeat units lie at residues 35–68 (AFTY…EIDP), 72–105 (SYIL…NPSL), and 120–153 (GEQA…APSN).

Belongs to the Ycf3 family.

It is found in the plastid. The protein localises to the chloroplast thylakoid membrane. In terms of biological role, essential for the assembly of the photosystem I (PSI) complex. May act as a chaperone-like factor to guide the assembly of the PSI subunits. This is Photosystem I assembly protein Ycf3 from Physcomitrium patens (Spreading-leaved earth moss).